The sequence spans 417 residues: MTRFDSIERAVADIAAGKAVVVVDDEDRENEGDLIFAAEKATPELVAFMVRYTSGYLCVPLDGADCDRLGLPPMYATNQDKHGTAYTVTVDAREGIGTGISASDRAATMRLLADPSSGAQDFTRPGHVVPLRAKEGGVLRRPGHTEAAVDLARMADLRPAGVICEIVSQKDEGHMAQTDELRVFADDHNLALISIADLIAWRRKHEKHVERVASARIPTRHGEFTAVGYRSIYDDVEHVALVRGDLPGPDGDGSDVLVRVHSECLTGDVFGSLRCDCGPQLDAALDMVAQEGRGVVLYMRGHEGRGIGLMHKLQAYQLQDAGSDTVDANLELGLPADARDYGIGAQILVDLGISSMRLLTNNPAKRVGLDGYGLQITERVSMPLRANAENLTYLRTKRDRMGHDLIGLDDFEAGEML.

A DHBP synthase region spans residues 1–204 (MTRFDSIERA…IADLIAWRRK (204 aa)). D-ribulose 5-phosphate is bound by residues 28–29 (RE), Asp-33, 141–145 (RPGHT), and Glu-165. A Mg(2+)-binding site is contributed by Glu-29. His-144 is a binding site for Mg(2+). The GTP cyclohydrolase II stretch occupies residues 205 to 417 (HEKHVERVAS…LDDFEAGEML (213 aa)). 259–263 (RVHSE) is a GTP binding site. 3 residues coordinate Zn(2+): Cys-264, Cys-275, and Cys-277. GTP contacts are provided by residues Gln-280, 303–305 (EGR), and Thr-325. Catalysis depends on Asp-337, which acts as the Proton acceptor; for GTP cyclohydrolase activity. The active-site Nucleophile; for GTP cyclohydrolase activity is Arg-339. GTP is bound by residues Thr-360 and Lys-365.

It in the N-terminal section; belongs to the DHBP synthase family. In the C-terminal section; belongs to the GTP cyclohydrolase II family. Mg(2+) serves as cofactor. Mn(2+) is required as a cofactor. Requires Zn(2+) as cofactor.

The catalysed reaction is D-ribulose 5-phosphate = (2S)-2-hydroxy-3-oxobutyl phosphate + formate + H(+). It catalyses the reaction GTP + 4 H2O = 2,5-diamino-6-hydroxy-4-(5-phosphoribosylamino)-pyrimidine + formate + 2 phosphate + 3 H(+). It functions in the pathway cofactor biosynthesis; riboflavin biosynthesis; 2-hydroxy-3-oxobutyl phosphate from D-ribulose 5-phosphate: step 1/1. It participates in cofactor biosynthesis; riboflavin biosynthesis; 5-amino-6-(D-ribitylamino)uracil from GTP: step 1/4. Functionally, catalyzes the conversion of D-ribulose 5-phosphate to formate and 3,4-dihydroxy-2-butanone 4-phosphate. Catalyzes the conversion of GTP to 2,5-diamino-6-ribosylamino-4(3H)-pyrimidinone 5'-phosphate (DARP), formate and pyrophosphate. The chain is Riboflavin biosynthesis protein RibBA from Rhodococcus jostii (strain RHA1).